A 333-amino-acid polypeptide reads, in one-letter code: MKFIDEATITVSSGKGGRGCVSFRRERFVPRGGPDGGDGGSGGSLLFRVNPSKRTLYAFRSKKQFAAPNGAPGEGRQKTGKSGDDLVIEVPPGTLIFDADTGAIIRDMVSPEEDFVFLTGGRGGKGNKHFATSTHQTPRFAQPGEPAQTATVRLELKLLADVGLIGLPNAGKSTLLSVISAARPAIGAYPFTTLSPNLGMVTLAGAEPFAVADIPGLIEGAHTGAGLGIRFLKHIERTRLLVHLIDASAIDPADPVAPFRIINAELAMFSPALAERPQVVVLNKMDLTGAEALAQQFINAAGIKKCFLISAATRSGVEELKKHLFELLCSHDT.

The region spanning 1-159 is the Obg domain; sequence MKFIDEATIT…ATVRLELKLL (159 aa). Positions 63–85 are disordered; it reads KQFAAPNGAPGEGRQKTGKSGDD. Basic and acidic residues predominate over residues 75-84; the sequence is GRQKTGKSGD. Positions 160–329 constitute an OBG-type G domain; it reads ADVGLIGLPN…LKKHLFELLC (170 aa). Residues 166-173, 191-195, 213-216, 283-286, and 310-312 contribute to the GTP site; these read GLPNAGKS, FTTLS, DIPG, NKMD, and SAA. Mg(2+) contacts are provided by serine 173 and threonine 193.

Belongs to the TRAFAC class OBG-HflX-like GTPase superfamily. OBG GTPase family. In terms of assembly, monomer. It depends on Mg(2+) as a cofactor.

The protein resides in the cytoplasm. An essential GTPase which binds GTP, GDP and possibly (p)ppGpp with moderate affinity, with high nucleotide exchange rates and a fairly low GTP hydrolysis rate. Plays a role in control of the cell cycle, stress response, ribosome biogenesis and in those bacteria that undergo differentiation, in morphogenesis control. The polypeptide is GTPase Obg (Desulfosudis oleivorans (strain DSM 6200 / JCM 39069 / Hxd3) (Desulfococcus oleovorans)).